The chain runs to 537 residues: Cytochrome P450 CYP12A2 (537 aa).

Position 483 (C483) interacts with heme.

This sequence belongs to the cytochrome P450 family. It depends on heme as a cofactor.

The protein is Cytochrome P450 CYP12A2 (CYP12A2) of Musca domestica (House fly).